Reading from the N-terminus, the 269-residue chain is Energy-coupling factor transporter ATP-binding protein EcfA1 (269 aa).

The ABC transporter domain maps to 8–242 (IEFKDVSFQY…EEALISVGLD (235 aa)). 42-49 (GHNGSGKS) is an ATP binding site.

It belongs to the ABC transporter superfamily. Energy-coupling factor EcfA family. Forms a stable energy-coupling factor (ECF) transporter complex composed of 2 membrane-embedded substrate-binding proteins (S component), 2 ATP-binding proteins (A component) and 2 transmembrane proteins (T component).

It is found in the cell membrane. ATP-binding (A) component of a common energy-coupling factor (ECF) ABC-transporter complex. Unlike classic ABC transporters this ECF transporter provides the energy necessary to transport a number of different substrates. The chain is Energy-coupling factor transporter ATP-binding protein EcfA1 from Staphylococcus epidermidis (strain ATCC 35984 / DSM 28319 / BCRC 17069 / CCUG 31568 / BM 3577 / RP62A).